Consider the following 702-residue polypeptide: Arginine decarboxylase 1, chloroplastic (702 aa).

The N-terminal 52 residues, methionine 1–tyrosine 52, are a transit peptide targeting the chloroplast. Position 136 is an N6-(pyridoxal phosphate)lysine (lysine 136). Pyridoxal 5'-phosphate contacts are provided by residues serine 288, glycine 325, and glutamate 374–arginine 377. Residue isoleucine 320–tyrosine 330 participates in substrate binding. Tyrosine 436–valine 437 lines the substrate pocket. Cysteine 524 (proton donor; shared with dimeric partner) is an active-site residue. Aspartate 525 serves as a coordination point for substrate. Tyrosine 565 serves as a coordination point for pyridoxal 5'-phosphate.

The protein belongs to the Orn/Lys/Arg decarboxylase class-II family. SpeA subfamily. In terms of assembly, homodimer. Only the dimer is catalytically active, as the active sites are constructed of residues from both monomers. May form a head-to-tail homodimer. Homodimer and heterodimer with ADC2. Requires pyridoxal 5'-phosphate as cofactor. It depends on Mg(2+) as a cofactor.

The protein resides in the plastid. It localises to the chloroplast. The protein localises to the cytoplasm. It is found in the cytosol. The enzyme catalyses L-arginine + H(+) = agmatine + CO2. Its pathway is amine and polyamine biosynthesis; agmatine biosynthesis; agmatine from L-arginine: step 1/1. Required for the biosynthesis of putrescine. Catalyzes the first step of polyamine (PA) biosynthesis to produce putrescine from arginine. Is a minor contributor to basal arginine decarboxylase (ADC) activity and putrescine biosynthesis. Accumulation of putrescine plays a positive role in freezing tolerance. Production of polyamines is essential for normal seed development. Controls PA homeostasis which is crucial for normal plant growth and development. The polypeptide is Arginine decarboxylase 1, chloroplastic (Arabidopsis thaliana (Mouse-ear cress)).